Consider the following 206-residue polypeptide: MLDKLITELDKGLRTLCAPAHSGRAHPDQDIAEADLSAAEKKHALGLMRVNHCGEVCAQALYQGQALTARDASAREALRQAAQEEVEHLAWTERRIRELGGRPSLLNPLWYTGSLALGVAAGVLGDKWNLGFLQETERQVGAHLDSHLSALPPDDARSRAIVRQMRDDELQHAEMAHELGAAELPAPVKAAMKLSAKVMTGSSYRV.

Fe cation is bound by residues Glu55, Glu85, His88, Glu137, Glu169, and His172.

This sequence belongs to the COQ7 family. Requires Fe cation as cofactor.

The protein resides in the cell membrane. It catalyses the reaction a 5-methoxy-2-methyl-3-(all-trans-polyprenyl)benzene-1,4-diol + AH2 + O2 = a 3-demethylubiquinol + A + H2O. Its pathway is cofactor biosynthesis; ubiquinone biosynthesis. Its function is as follows. Catalyzes the hydroxylation of 2-nonaprenyl-3-methyl-6-methoxy-1,4-benzoquinol during ubiquinone biosynthesis. The protein is 3-demethoxyubiquinol 3-hydroxylase of Chromobacterium violaceum (strain ATCC 12472 / DSM 30191 / JCM 1249 / CCUG 213 / NBRC 12614 / NCIMB 9131 / NCTC 9757 / MK).